Consider the following 367-residue polypeptide: uncharacterized protein (367 aa).

To M.tuberculosis Rv0502.

This is an uncharacterized protein from Mycobacterium leprae (strain TN).